The chain runs to 447 residues: Cysteine--tRNA ligase (447 aa).

Cysteine 28 provides a ligand contact to Zn(2+). A 'HIGH' region motif is present at residues proline 30–asparagine 40. The Zn(2+) site is built by cysteine 211, histidine 236, and glutamate 240. A 'KMSKS' region motif is present at residues lysine 268–serine 272. Lysine 271 contributes to the ATP binding site.

This sequence belongs to the class-I aminoacyl-tRNA synthetase family. As to quaternary structure, monomer. Zn(2+) is required as a cofactor.

It is found in the cytoplasm. The catalysed reaction is tRNA(Cys) + L-cysteine + ATP = L-cysteinyl-tRNA(Cys) + AMP + diphosphate. This Streptococcus mutans serotype c (strain ATCC 700610 / UA159) protein is Cysteine--tRNA ligase.